The chain runs to 94 residues: Small ribosomal subunit protein uS17 (94 aa).

It belongs to the universal ribosomal protein uS17 family. As to quaternary structure, part of the 30S ribosomal subunit.

Its function is as follows. One of the primary rRNA binding proteins, it binds specifically to the 5'-end of 16S ribosomal RNA. This is Small ribosomal subunit protein uS17 from Symbiobacterium thermophilum (strain DSM 24528 / JCM 14929 / IAM 14863 / T).